We begin with the raw amino-acid sequence, 372 residues long: uncharacterized protein (372 aa).

The first 19 residues, Met1–Ser19, serve as a signal peptide directing secretion. Asn18 carries an N-linked (GlcNAc...) asparagine glycan. Residues Ser20–Ile160 form the MRH domain. A disulfide bridge connects residues Cys22 and Cys58. Asn59 is a glycosylation site (N-linked (GlcNAc...) asparagine). Cys128 and Cys158 form a disulfide bridge. Positions Asn185–Ile282 form a coiled coil. The tract at residues Lys201 to Asn233 is disordered. The span at Asn206 to Asn230 shows a compositional bias: low complexity.

It is found in the secreted. This is an uncharacterized protein from Dictyostelium discoideum (Social amoeba).